Consider the following 89-residue polypeptide: Cytochrome c oxidase subunit 7A, mitochondrial (89 aa).

Residues 1–31 (MMNLSRAVVRSFATTAGRRSAAVPKDQIEKG) constitute a mitochondrion transit peptide. The Mitochondrial matrix segment spans residues 32–58 (YFEIRKVQEHFQKKDGKPVFLKGSVVD). A helical membrane pass occupies residues 59 to 81 (NVLYRVTVALALVGIGGMGKLFY). Residues 82–89 (ELSVPKKE) are Mitochondrial intermembrane-facing.

Belongs to the cytochrome c oxidase VIIa family. As to quaternary structure, component of the cytochrome c oxidase (complex IV, CIV), a multisubunit enzyme composed of a catalytic core of 3 subunits and several supernumerary subunits. The complex exists as a monomer or a dimer and forms supercomplexes (SCs) in the inner mitochondrial membrane with ubiquinol-cytochrome c oxidoreductase (cytochrome b-c1 complex, complex III, CIII).

The protein localises to the mitochondrion inner membrane. The protein operates within energy metabolism; oxidative phosphorylation. In terms of biological role, component of the cytochrome c oxidase, the last enzyme in the mitochondrial electron transport chain which drives oxidative phosphorylation. The respiratory chain contains 3 multisubunit complexes succinate dehydrogenase (complex II, CII), ubiquinol-cytochrome c oxidoreductase (cytochrome b-c1 complex, complex III, CIII) and cytochrome c oxidase (complex IV, CIV), that cooperate to transfer electrons derived from NADH and succinate to molecular oxygen, creating an electrochemical gradient over the inner membrane that drives transmembrane transport and the ATP synthase. Cytochrome c oxidase is the component of the respiratory chain that catalyzes the reduction of oxygen to water. Electrons originating from reduced cytochrome c in the intermembrane space (IMS) are transferred via the dinuclear copper A center (CU(A)) of subunit 2 and heme A of subunit 1 to the active site in subunit 1, a binuclear center (BNC) formed by heme A3 and copper B (CU(B)). The BNC reduces molecular oxygen to 2 water molecules using 4 electrons from cytochrome c in the IMS and 4 protons from the mitochondrial matrix. This Drosophila melanogaster (Fruit fly) protein is Cytochrome c oxidase subunit 7A, mitochondrial.